We begin with the raw amino-acid sequence, 191 residues long: NAD(P)H-dependent FMN reductase LOT6 (191 aa).

FMN contacts are provided by residues Arg-11, Gln-94–Trp-97, and Tyr-124.

As to quaternary structure, homodimer.

The protein resides in the cytoplasm. Its subcellular location is the nucleus. The enzyme catalyses FMNH2 + NADP(+) = FMN + NADPH + 2 H(+). It catalyses the reaction FMNH2 + NAD(+) = FMN + NADH + 2 H(+). Functionally, has several reductase activities that are NAD(P)H-dependent and involve FMN as a cofactor, ferricyanide being the best substrate for reduction. May be involved in ferric iron assimilation. The polypeptide is NAD(P)H-dependent FMN reductase LOT6 (LOT6) (Saccharomyces cerevisiae (strain ATCC 204508 / S288c) (Baker's yeast)).